The following is a 177-amino-acid chain: MFHVSFRYIFGLPPLILVLLPVASSDCDIEGKDGKQYESVLMVSIDQLLDSMKEIGSNCLNNEFNFFKRHICDANKEGMFLFRAARKLRQFLKMNSTGDFDLHLLKVSEGTTILLNCTGQVKGRKPAALGEAQPTKSLEENKSLKEQKKLNDLCFLKRLLQEIKTCWNKILMGTKEH.

Positions Met1 to Ser25 are cleaved as a signal peptide. Disulfide bonds link Cys27-Cys166, Cys59-Cys154, and Cys72-Cys117. N-linked (GlcNAc...) asparagine glycosylation is found at Asn95, Asn116, and Asn141.

It belongs to the IL-7/IL-9 family. Interacts with IL7R and CSF2RG.

Its subcellular location is the secreted. Hematopoietic cytokine that plays an essential role in the development, expansion, and survival of naive and memory T-cells and B-cells thereby regulating the number of mature lymphocytes and maintaining lymphoid homeostasis. Mechanistically, exerts its biological effects through a receptor composed of IL7RA subunit and the cytokine receptor common subunit gamma/CSF2RG. Binding to the receptor leads to activation of various kinases including JAK1 or JAK3 depending on the cell type and subsequently propagation of signals through activation of several downstream signaling pathways including the PI3K/Akt/mTOR or the JAK-STAT5. The polypeptide is Interleukin-7 (IL7) (Homo sapiens (Human)).